Here is a 448-residue protein sequence, read N- to C-terminus: Arginine synthetase ArcE (448 aa).

As to quaternary structure, probably forms homotetramers and higher assemblies of tetramers. Requires Mg(2+) as cofactor.

The catalysed reaction is L-arginine + ADP + phosphate + H(+) = L-citrulline + NH4(+) + ATP. Its pathway is amino-acid biosynthesis; L-proline biosynthesis. It participates in amino-acid degradation; L-arginine degradation. It functions in the pathway amino-acid biosynthesis; L-arginine biosynthesis. Its function is as follows. Arginine deiminase involved in an arginine synthetase pathway, which provides citrulline and ornithine, the precursors for proline biosynthesis. Catalyzes the conversion of L-arginine to citrulline while conserving the energy of arginine deimination to generate ATP from ADP and free phosphate. Is specific toward L-arginine and cannot use D-arginine, agmatine, guanidine, L-alanine-L-arginine dipeptide and L-arginine-L-alanine dipeptide. Can also use CDP, GDP or UDP, with lower activity (38%, 8.4% and 13.3%, respectively). The enzyme can also catalyze the reverse reaction: the ATP-dependent generation of arginine from citrulline in a single reaction by using free ammonia, without the requirement of aspartic acid. In vivo, most likely functions in the arginine catabolism to produce citrulline for proline biosynthesis while also generating ATP, but it can also contribute to arginine biosynthesis when the necessary precursors such as citrulline are abundant. This chain is Arginine synthetase ArcE, found in Thermococcus kodakarensis (strain ATCC BAA-918 / JCM 12380 / KOD1) (Pyrococcus kodakaraensis (strain KOD1)).